Consider the following 550-residue polypeptide: Integral membrane protein DGCR2/IDD (550 aa).

Positions 1–20 (MVPKADSGAFLLLFLLVLTV) are cleaved as a signal peptide. The Extracellular portion of the chain corresponds to 21–349 (TEPLRPELRC…LFDSMASGMR (329 aa)). Positions 28–68 (LRCNPGQFACRSGTIQCIPLPWQCDGWATCEDESDEANCPE) constitute an LDL-receptor class A domain. 3 cysteine pairs are disulfide-bonded: C30-C44, C37-C57, and C51-C66. Residues 69–92 (VTGEVRPHHGKEAVDPRQGRARGG) form a disordered region. A compositionally biased stretch (basic and acidic residues) spans 71–92 (GEVRPHHGKEAVDPRQGRARGG). In terms of domain architecture, C-type lectin spans 115 to 241 (CPTGWHHYEG…FCAQLQCFHF (127 aa)). 2 cysteine pairs are disulfide-bonded: C145-C265 and C233-C257. 2 N-linked (GlcNAc...) asparagine glycosylation sites follow: N149 and N196. Positions 270–333 (TCVDIKDNVV…PKECCKFMCL (64 aa)) constitute a VWFC domain. Residues 350–368 (LVVSCISSFLILSLLLFMV) form a helical membrane-spanning segment. The Cytoplasmic segment spans residues 369–550 (HRLRQRRRER…HSRSSLNTVV (182 aa)). A Phosphoserine modification is found at S381. The interval 500-550 (AGASLADLEDSADSSSALLVPPDPAQSGSTPAAEALPGGGRHSRSSLNTVV) is disordered.

Predominantly expressed in brain, heart, lung and fetal kidney. Low levels in liver and adult kidney.

It localises to the membrane. Functionally, putative adhesion receptor, that could be involved in cell-cell or cell-matrix interactions required for normal cell differentiation and migration. The chain is Integral membrane protein DGCR2/IDD (DGCR2) from Homo sapiens (Human).